The primary structure comprises 350 residues: Phosphate acyltransferase (350 aa).

Belongs to the PlsX family. Homodimer. Probably interacts with PlsY.

Its subcellular location is the cytoplasm. The catalysed reaction is a fatty acyl-[ACP] + phosphate = an acyl phosphate + holo-[ACP]. Its pathway is lipid metabolism; phospholipid metabolism. Catalyzes the reversible formation of acyl-phosphate (acyl-PO(4)) from acyl-[acyl-carrier-protein] (acyl-ACP). This enzyme utilizes acyl-ACP as fatty acyl donor, but not acyl-CoA. The sequence is that of Phosphate acyltransferase from Chelativorans sp. (strain BNC1).